The chain runs to 161 residues: Putative pre-16S rRNA nuclease (161 aa).

This sequence belongs to the YqgF nuclease family.

The protein localises to the cytoplasm. In terms of biological role, could be a nuclease involved in processing of the 5'-end of pre-16S rRNA. The protein is Putative pre-16S rRNA nuclease of Bradyrhizobium diazoefficiens (strain JCM 10833 / BCRC 13528 / IAM 13628 / NBRC 14792 / USDA 110).